A 150-amino-acid chain; its full sequence is Geranyl diphosphate phosphohydrolase (150 aa).

Positions 14–147 (SIKVAVVVCL…DNVVQDGFNP (134 aa)) constitute a Nudix hydrolase domain. The short motif at 48–69 (GHLEFGESFEECAARELKEETD) is the Nudix box element. Residues Glu-63 and Glu-67 each coordinate Mg(2+).

Belongs to the Nudix hydrolase family. In terms of tissue distribution, expressed in petals. Little or no expression in stamens, sepals or young leaves.

Its subcellular location is the cytoplasm. It catalyses the reaction (2E)-geranyl diphosphate + H2O = (2E)-geranyl phosphate + phosphate + H(+). In terms of biological role, involved in a cytosolic pathway for the biosynthesis of free monoterpene alcohols that contribute to fragrance. Lacks terpene synthase activity, but has a diphosphohydrolase activity with geranyl diphosphate and farnesyl diphosphate as substrates. No activity with 8-oxo-dGTP and dGTP and unable to dephosphorylate geranyl phosphate to geraniol. The chain is Geranyl diphosphate phosphohydrolase from Rosa hybrid cultivar.